The chain runs to 350 residues: UDP-rhamnose/UDP-galactose transporter 3 (350 aa).

The next 10 helical transmembrane spans lie at 12-32, 41-61, 81-101, 104-124, 133-153, 160-180, 200-220, 224-244, 257-277, and 286-306; these read AVSD…IIMA, GFAF…TALV, LIWF…SLML, VGFY…MEWI, EVKI…VTDV, FICA…IGSL, AFSL…KFIM, MSSG…FCNI, SFQV…WLLF, and VAGM…MELE.

Belongs to the TPT transporter family. TPT (TC 2.A.7.9) subfamily.

The protein resides in the golgi apparatus membrane. Its function is as follows. Nucleotide-sugar transporter that transports UDP-rhamnose or UDP-galactose and UMP in a strict counter-exchange mode. The polypeptide is UDP-rhamnose/UDP-galactose transporter 3 (Arabidopsis thaliana (Mouse-ear cress)).